A 205-amino-acid chain; its full sequence is Small ribosomal subunit protein uS4 (205 aa).

The segment covering Met-1–Asp-12 has biased composition (basic residues). The segment at Met-1–Gly-49 is disordered. Positions Arg-94–Val-155 constitute an S4 RNA-binding domain.

Belongs to the universal ribosomal protein uS4 family. As to quaternary structure, part of the 30S ribosomal subunit. Contacts protein S5. The interaction surface between S4 and S5 is involved in control of translational fidelity.

One of the primary rRNA binding proteins, it binds directly to 16S rRNA where it nucleates assembly of the body of the 30S subunit. In terms of biological role, with S5 and S12 plays an important role in translational accuracy. The chain is Small ribosomal subunit protein uS4 from Methylobacterium radiotolerans (strain ATCC 27329 / DSM 1819 / JCM 2831 / NBRC 15690 / NCIMB 10815 / 0-1).